The chain runs to 187 residues: Large ribosomal subunit protein bL17 (187 aa).

The tract at residues 122–187 is disordered; the sequence is PKVRSSRTST…EADAAEKSDK (66 aa). Residues 127 to 144 are compositionally biased toward low complexity; the sequence is SRTSTATAPVAAAPVAEA. A compositionally biased stretch (acidic residues) spans 145 to 157; it reads PAEESDVPVEETD. Positions 167 to 176 are enriched in low complexity; that stretch reads AETTDAAAAE.

Belongs to the bacterial ribosomal protein bL17 family. As to quaternary structure, part of the 50S ribosomal subunit. Contacts protein L32.

The chain is Large ribosomal subunit protein bL17 from Clavibacter sepedonicus (Clavibacter michiganensis subsp. sepedonicus).